A 534-amino-acid chain; its full sequence is Serine/threonine-protein kinase ppk15 (534 aa).

The disordered stretch occupies residues 1–40; it reads MDSDSPILPLSNNPPAARTHDHSQRNNHARHVSSSGTTLF. Serine 33, serine 56, and serine 60 each carry phosphoserine. Residues 85-104 form a disordered region; the sequence is FSSEQNPRRPLTKPSEGVHN. One can recognise a Protein kinase domain in the interval 130-458; it reads YLILDTLGHG…PDQAKNHPFI (329 aa). Residues 136-144 and lysine 159 each bind ATP; that span reads LGHGTFGQV. The Proton acceptor role is filled by aspartate 257. Phosphotyrosine is present on tyrosine 291.

Belongs to the protein kinase superfamily. Ser/Thr protein kinase family.

Its subcellular location is the cytoplasm. It localises to the cytoskeleton. It is found in the microtubule organizing center. The protein resides in the spindle pole body. It catalyses the reaction L-seryl-[protein] + ATP = O-phospho-L-seryl-[protein] + ADP + H(+). The enzyme catalyses L-threonyl-[protein] + ATP = O-phospho-L-threonyl-[protein] + ADP + H(+). This Schizosaccharomyces pombe (strain 972 / ATCC 24843) (Fission yeast) protein is Serine/threonine-protein kinase ppk15 (ppk15).